The following is a 94-amino-acid chain: Small ribosomal subunit protein bS20 (94 aa).

It belongs to the bacterial ribosomal protein bS20 family.

Functionally, binds directly to 16S ribosomal RNA. The polypeptide is Small ribosomal subunit protein bS20 (Acaryochloris marina (strain MBIC 11017)).